The sequence spans 1376 residues: DNA-directed RNA polymerase subunit beta (1376 aa).

This sequence belongs to the RNA polymerase beta chain family. The RNAP catalytic core consists of 2 alpha, 1 beta, 1 beta' and 1 omega subunit. When a sigma factor is associated with the core the holoenzyme is formed, which can initiate transcription.

It carries out the reaction RNA(n) + a ribonucleoside 5'-triphosphate = RNA(n+1) + diphosphate. In terms of biological role, DNA-dependent RNA polymerase catalyzes the transcription of DNA into RNA using the four ribonucleoside triphosphates as substrates. In Methylorubrum extorquens (strain PA1) (Methylobacterium extorquens), this protein is DNA-directed RNA polymerase subunit beta.